We begin with the raw amino-acid sequence, 518 residues long: MAMAMALRKLSSSVNKSSRPLFSASSLYYKSSLPDEAVYDKENPRVTWPKQLNSPLEVIDPEIADIIELEKARQWKGLELIPSENFTSLSVMQAVGSVMTNKYSEGYPGARYYGGNEYIDMAETLCQKRALEAFRLDPAKWGVNVQPLSGSPSNFQVYTALLKPHDRIMALDLPHGGHLSHGYQTDTKKISAVSIFFETMPYRLDESTGYIDYDQLEKSATLFRPKLIVAGASAYARLYDYARIRKVCDKQKAVLLADMAHISGLVAAGVIPSPFDYADVVTTTTHKSLRGPRGAMIFFRKGLKEVNKQGKEVFYDYEDKINQAVFPGLQGGPHNHTITGLAVALKQATTPEYRAYQEQVLSNSSKFAKALSEKGYDLVSGGTENHLVLVNLKNKGIDGSRVEKVLELVHIAANKNTVPGDVSAMVPGGIRMGTPALTSRGFVEEDFVKVAEYFDAAVSLALKVKAESKGTKLKDFVEALQTSSYVQSEISKLKHDVEEFAKQFPTIGFEKATMKYNK.

A mitochondrion-targeting transit peptide spans Met1–Ser31. Lys287 is modified (N6-(pyridoxal phosphate)lysine).

This sequence belongs to the SHMT family. In terms of assembly, homotetramer. Pyridoxal 5'-phosphate serves as cofactor.

It localises to the mitochondrion. It carries out the reaction (6R)-5,10-methylene-5,6,7,8-tetrahydrofolate + glycine + H2O = (6S)-5,6,7,8-tetrahydrofolate + L-serine. It participates in one-carbon metabolism; tetrahydrofolate interconversion. Functionally, catalyzes the interconversion of serine and glycine. This is Serine hydroxymethyltransferase, mitochondrial from Pisum sativum (Garden pea).